We begin with the raw amino-acid sequence, 483 residues long: Cysteine--tRNA ligase (483 aa).

Cysteine 27 is a binding site for Zn(2+). The 'HIGH' region motif lies at 29–39 (ITAYDYCHIGH). Residues cysteine 208, histidine 231, and glutamate 235 each coordinate Zn(2+). The short motif at 263 to 267 (KMSKS) is the 'KMSKS' region element. Lysine 266 lines the ATP pocket.

It belongs to the class-I aminoacyl-tRNA synthetase family. As to quaternary structure, monomer. Zn(2+) is required as a cofactor.

The protein resides in the cytoplasm. The catalysed reaction is tRNA(Cys) + L-cysteine + ATP = L-cysteinyl-tRNA(Cys) + AMP + diphosphate. This is Cysteine--tRNA ligase from Desulfovibrio desulfuricans (strain ATCC 27774 / DSM 6949 / MB).